The following is a 426-amino-acid chain: 4-aminobutyrate aminotransferase GabT (426 aa).

Pyridoxal 5'-phosphate is bound by residues 111–112 (GS) and glutamine 242. N6-(pyridoxal phosphate)lysine is present on lysine 268. Threonine 297 provides a ligand contact to pyridoxal 5'-phosphate.

Belongs to the class-III pyridoxal-phosphate-dependent aminotransferase family. Homotetramer. It depends on pyridoxal 5'-phosphate as a cofactor.

The catalysed reaction is 4-aminobutanoate + 2-oxoglutarate = succinate semialdehyde + L-glutamate. It catalyses the reaction 5-aminopentanoate + 2-oxoglutarate = 5-oxopentanoate + L-glutamate. Its pathway is amino-acid degradation; 4-aminobutanoate degradation. It functions in the pathway amino-acid degradation. Functionally, pyridoxal phosphate-dependent enzyme that catalyzes transamination between primary amines and alpha-keto acids. Catalyzes the transfer of the amino group from gamma-aminobutyrate (GABA) to alpha-ketoglutarate (KG) to yield succinic semialdehyde (SSA) and glutamate. Thereby functions in a GABA degradation pathway that allows some E.coli strains to utilize GABA as a nitrogen source for growth. Also catalyzes the conversion of 5-aminovalerate to glutarate semialdehyde, as part of a L-lysine degradation pathway that proceeds via cadaverine, glutarate and L-2-hydroxyglutarate. The polypeptide is 4-aminobutyrate aminotransferase GabT (gabT) (Escherichia coli (strain K12)).